The primary structure comprises 259 residues: Putative aldolase class 2 protein PA3430 (259 aa).

Positions 113, 115, and 176 each coordinate Zn(2+).

This sequence belongs to the aldolase class II family. It depends on Zn(2+) as a cofactor.

The polypeptide is Putative aldolase class 2 protein PA3430 (Pseudomonas aeruginosa (strain ATCC 15692 / DSM 22644 / CIP 104116 / JCM 14847 / LMG 12228 / 1C / PRS 101 / PAO1)).